The following is a 104-amino-acid chain: Integration host factor subunit beta (104 aa).

This sequence belongs to the bacterial histone-like protein family. Heterodimer of an alpha and a beta chain.

This protein is one of the two subunits of integration host factor, a specific DNA-binding protein that functions in genetic recombination as well as in transcriptional and translational control. The chain is Integration host factor subunit beta (ihfB) from Neisseria gonorrhoeae.